Consider the following 123-residue polypeptide: Histone H2B (123 aa).

A disordered region spans residues 1–32; it reads MPPKAASKGAKKAASKAKAARSTDKKKRRRRR. Basic residues predominate over residues 9–32; sequence GAKKAASKAKAARSTDKKKRRRRR. Ser-110 carries an O-linked (GlcNAc) serine glycan. A Glycyl lysine isopeptide (Lys-Gly) (interchain with G-Cter in ubiquitin) cross-link involves residue Lys-118.

Belongs to the histone H2B family. The nucleosome is a histone octamer containing two molecules each of H2A, H2B, H3 and H4 assembled in one H3-H4 heterotetramer and two H2A-H2B heterodimers. The octamer wraps approximately 147 bp of DNA. Monoubiquitination of Lys-118 gives a specific tag for epigenetic transcriptional activation and is also prerequisite for histone H3 'Lys-4' and 'Lys-79' methylation.

The protein resides in the nucleus. It localises to the chromosome. Core component of nucleosome. Nucleosomes wrap and compact DNA into chromatin, limiting DNA accessibility to the cellular machineries which require DNA as a template. Histones thereby play a central role in transcription regulation, DNA repair, DNA replication and chromosomal stability. DNA accessibility is regulated via a complex set of post-translational modifications of histones, also called histone code, and nucleosome remodeling. This is Histone H2B from Urechis caupo (Innkeeper worm).